Reading from the N-terminus, the 296-residue chain is Glycine--tRNA ligase alpha subunit (296 aa).

Belongs to the class-II aminoacyl-tRNA synthetase family. In terms of assembly, tetramer of two alpha and two beta subunits.

The protein resides in the cytoplasm. It carries out the reaction tRNA(Gly) + glycine + ATP = glycyl-tRNA(Gly) + AMP + diphosphate. This Desulfitobacterium hafniense (strain Y51) protein is Glycine--tRNA ligase alpha subunit.